Consider the following 142-residue polypeptide: RNA polymerase-binding transcription factor DksA (142 aa).

Disordered stretches follow at residues 1–20 (MQTA…EDEP), 51–70 (HLQK…SSET), and 119–142 (RPTA…HRDD). Residues 104–128 (CEETGEPIGLARLEARPTATMSVEA) form a dksA C4-type zinc finger. The segment covering 128-142 (AQERHERRERVHRDD) has biased composition (basic and acidic residues).

It belongs to the DksA family. As to quaternary structure, interacts directly with the RNA polymerase.

Its subcellular location is the cytoplasm. Functionally, transcription factor that acts by binding directly to the RNA polymerase (RNAP). Required for negative regulation of rRNA expression and positive regulation of several amino acid biosynthesis promoters. This is RNA polymerase-binding transcription factor DksA from Caulobacter vibrioides (strain ATCC 19089 / CIP 103742 / CB 15) (Caulobacter crescentus).